The following is a 274-amino-acid chain: 2-dehydro-3-deoxyphosphooctonate aldolase (274 aa).

Belongs to the KdsA family.

The protein resides in the cytoplasm. The enzyme catalyses D-arabinose 5-phosphate + phosphoenolpyruvate + H2O = 3-deoxy-alpha-D-manno-2-octulosonate-8-phosphate + phosphate. Its pathway is carbohydrate biosynthesis; 3-deoxy-D-manno-octulosonate biosynthesis; 3-deoxy-D-manno-octulosonate from D-ribulose 5-phosphate: step 2/3. It functions in the pathway bacterial outer membrane biogenesis; lipopolysaccharide biosynthesis. The chain is 2-dehydro-3-deoxyphosphooctonate aldolase from Rickettsia peacockii (strain Rustic).